We begin with the raw amino-acid sequence, 264 residues long: Thymidylate synthase (264 aa).

Residue Arg21 participates in dUMP binding. A (6R)-5,10-methylene-5,6,7,8-tetrahydrofolate-binding site is contributed by His51. Residue 126-127 (RR) coordinates dUMP. Cys146 serves as the catalytic Nucleophile. DUMP is bound by residues 166–169 (RSAD), Asn177, and 207–209 (HIY). Residue Asp169 participates in (6R)-5,10-methylene-5,6,7,8-tetrahydrofolate binding. Ala263 is a (6R)-5,10-methylene-5,6,7,8-tetrahydrofolate binding site.

It belongs to the thymidylate synthase family. Bacterial-type ThyA subfamily. In terms of assembly, homodimer.

It is found in the cytoplasm. It catalyses the reaction dUMP + (6R)-5,10-methylene-5,6,7,8-tetrahydrofolate = 7,8-dihydrofolate + dTMP. It functions in the pathway pyrimidine metabolism; dTTP biosynthesis. Its function is as follows. Catalyzes the reductive methylation of 2'-deoxyuridine-5'-monophosphate (dUMP) to 2'-deoxythymidine-5'-monophosphate (dTMP) while utilizing 5,10-methylenetetrahydrofolate (mTHF) as the methyl donor and reductant in the reaction, yielding dihydrofolate (DHF) as a by-product. This enzymatic reaction provides an intracellular de novo source of dTMP, an essential precursor for DNA biosynthesis. This chain is Thymidylate synthase, found in Brucella ovis (strain ATCC 25840 / 63/290 / NCTC 10512).